We begin with the raw amino-acid sequence, 133 residues long: Probable mitochondrial pyruvate carrier 2 (133 aa).

The next 3 helical transmembrane spans lie at 40-57, 73-91, and 100-116; these read VFFW…AGLA, ALFA…ITPI, and FFVM…IAHY.

This sequence belongs to the mitochondrial pyruvate carrier (MPC) (TC 2.A.105) family.

The protein resides in the mitochondrion inner membrane. In terms of biological role, may mediate the uptake of pyruvate into mitochondria. The sequence is that of Probable mitochondrial pyruvate carrier 2 from Caenorhabditis elegans.